The sequence spans 882 residues: DNA mismatch repair protein MutS (882 aa).

635-642 is an ATP binding site; sequence GPNMGGKS.

It belongs to the DNA mismatch repair MutS family.

This protein is involved in the repair of mismatches in DNA. It is possible that it carries out the mismatch recognition step. This protein has a weak ATPase activity. The sequence is that of DNA mismatch repair protein MutS from Janthinobacterium sp. (strain Marseille) (Minibacterium massiliensis).